Consider the following 729-residue polypeptide: Fatty acid oxidation complex subunit alpha (729 aa).

The segment at 1–189 (MLYKGDTLYL…KIGLVDGVVK (189 aa)) is enoyl-CoA hydratase/isomerase. Aspartate 296 provides a ligand contact to substrate. The tract at residues 311–729 (ETPKQAAVLG…ARPVGDLKTA (419 aa)) is 3-hydroxyacyl-CoA dehydrogenase. NAD(+) is bound by residues methionine 324, aspartate 343, 400 to 402 (VVE), lysine 407, and serine 429. The active-site For 3-hydroxyacyl-CoA dehydrogenase activity is histidine 450. Asparagine 453 serves as a coordination point for NAD(+). Substrate is bound by residues asparagine 500 and tyrosine 660. Residues 708–729 (RHNEPYYPPVEPARPVGDLKTA) form a disordered region.

In the N-terminal section; belongs to the enoyl-CoA hydratase/isomerase family. It in the C-terminal section; belongs to the 3-hydroxyacyl-CoA dehydrogenase family. In terms of assembly, heterotetramer of two alpha chains (FadB) and two beta chains (FadA).

It carries out the reaction a (3S)-3-hydroxyacyl-CoA + NAD(+) = a 3-oxoacyl-CoA + NADH + H(+). The catalysed reaction is a (3S)-3-hydroxyacyl-CoA = a (2E)-enoyl-CoA + H2O. The enzyme catalyses a 4-saturated-(3S)-3-hydroxyacyl-CoA = a (3E)-enoyl-CoA + H2O. It catalyses the reaction (3S)-3-hydroxybutanoyl-CoA = (3R)-3-hydroxybutanoyl-CoA. It carries out the reaction a (3Z)-enoyl-CoA = a 4-saturated (2E)-enoyl-CoA. The catalysed reaction is a (3E)-enoyl-CoA = a 4-saturated (2E)-enoyl-CoA. The protein operates within lipid metabolism; fatty acid beta-oxidation. Functionally, involved in the aerobic and anaerobic degradation of long-chain fatty acids via beta-oxidation cycle. Catalyzes the formation of 3-oxoacyl-CoA from enoyl-CoA via L-3-hydroxyacyl-CoA. It can also use D-3-hydroxyacyl-CoA and cis-3-enoyl-CoA as substrate. The polypeptide is Fatty acid oxidation complex subunit alpha (Escherichia coli (strain UTI89 / UPEC)).